A 189-amino-acid polypeptide reads, in one-letter code: Peptidyl-tRNA hydrolase (189 aa).

Histidine 19 serves as the catalytic Proton acceptor. 3 residues coordinate tRNA: tyrosine 64, asparagine 66, and asparagine 112.

This sequence belongs to the PTH family. In terms of assembly, monomer.

The protein localises to the cytoplasm. It carries out the reaction an N-acyl-L-alpha-aminoacyl-tRNA + H2O = an N-acyl-L-amino acid + a tRNA + H(+). In terms of biological role, hydrolyzes ribosome-free peptidyl-tRNAs (with 1 or more amino acids incorporated), which drop off the ribosome during protein synthesis, or as a result of ribosome stalling. Catalyzes the release of premature peptidyl moieties from peptidyl-tRNA molecules trapped in stalled 50S ribosomal subunits, and thus maintains levels of free tRNAs and 50S ribosomes. The protein is Peptidyl-tRNA hydrolase of Gluconobacter oxydans (strain 621H) (Gluconobacter suboxydans).